Reading from the N-terminus, the 104-residue chain is NADH-quinone oxidoreductase subunit K (104 aa).

The next 3 membrane-spanning stretches (helical) occupy residues 7 to 27 (LSHY…GIFL), 33 to 53 (IVIL…LVSF), and 67 to 87 (LLVL…LVVF).

It belongs to the complex I subunit 4L family. As to quaternary structure, NDH-1 is composed of 14 different subunits. Subunits NuoA, H, J, K, L, M, N constitute the membrane sector of the complex.

The protein resides in the cell inner membrane. The enzyme catalyses a quinone + NADH + 5 H(+)(in) = a quinol + NAD(+) + 4 H(+)(out). NDH-1 shuttles electrons from NADH, via FMN and iron-sulfur (Fe-S) centers, to quinones in the respiratory chain. The immediate electron acceptor for the enzyme in this species is believed to be ubiquinone. Couples the redox reaction to proton translocation (for every two electrons transferred, four hydrogen ions are translocated across the cytoplasmic membrane), and thus conserves the redox energy in a proton gradient. This Xanthobacter autotrophicus (strain ATCC BAA-1158 / Py2) protein is NADH-quinone oxidoreductase subunit K.